We begin with the raw amino-acid sequence, 133 residues long: Profilin-1 (133 aa).

An intrachain disulfide couples cysteine 95 to cysteine 117.

It belongs to the profilin family. As to quaternary structure, dimer and tetramer. Occurs in many kinds of cells as a complex with monomeric actin in a 1:1 ratio.

It is found in the cytoplasm. The protein localises to the cytoskeleton. Its function is as follows. Binds to actin and affects the structure of the cytoskeleton. At high concentrations, profilin prevents the polymerization of actin, whereas it enhances it at low concentrations. By binding to PIP2, it inhibits the formation of IP3 and DG. Possesses high binding affinity for poly(L-proline). The sequence is that of Profilin-1 from Artemisia vulgaris (Mugwort).